A 32-amino-acid polypeptide reads, in one-letter code: Kappa-conotoxin SrXIA (32 aa).

Cystine bridges form between cysteine 1/cysteine 15, cysteine 8/cysteine 20, cysteine 14/cysteine 24, and cysteine 19/cysteine 28. 2 positions are modified to 4-carboxyglutamate: glutamate 9 and glutamate 10. Position 32 is a proline amide (proline 32).

It belongs to the conotoxin I2 superfamily. As to expression, expressed by the venom duct.

The protein localises to the secreted. Its function is as follows. Kappa-conotoxins bind and inhibit voltage-gated potassium channels. This toxin inhibits Kv1.2/KCNA2 and Kv1.6/KCNA6. Produces stiffening of body, limbs and tail when injected intracranially into mice. The polypeptide is Kappa-conotoxin SrXIA (Conus spurius (Alphabet cone)).